Here is a 96-residue protein sequence, read N- to C-terminus: Signal recognition particle 19 kDa protein (96 aa).

Belongs to the SRP19 family. As to quaternary structure, part of the signal recognition particle protein translocation system, which is composed of SRP and FtsY. Archaeal SRP consists of a 7S RNA molecule of 300 nucleotides and two protein subunits: SRP54 and SRP19.

The protein localises to the cytoplasm. Involved in targeting and insertion of nascent membrane proteins into the cytoplasmic membrane. Binds directly to 7S RNA and mediates binding of the 54 kDa subunit of the SRP. The sequence is that of Signal recognition particle 19 kDa protein from Pyrobaculum arsenaticum (strain DSM 13514 / JCM 11321 / PZ6).